Reading from the N-terminus, the 270-residue chain is MSNVRSDKPFVLAGRTFQSRLLVGTGKYRDMEETRLATEASGAEIVTVAVRRTNLGQNAGEPNLLDVLSPEKYTILPNTAGCFDAVEAVRTCRLARELLDGYKSHENRTLVKLEVLADQKTLFPNVIETLKAAEVLVKDGFDVMVYTSDDPIIARQLAEAGCIAVMPLAGLIGTGLGICNPYNLQIILEESKVPVLVDAGVGTASDATIAMEMGCEAVLMNSAIAHAQQPVLMAEAMKHAILAGRMAYLAGRMPKKLYASASSPLEGLIK.

K112 acts as the Schiff-base intermediate with DXP in catalysis. Residues G173, 199-200 (AG), and 221-222 (NS) each bind 1-deoxy-D-xylulose 5-phosphate.

Belongs to the ThiG family. In terms of assembly, homotetramer. Forms heterodimers with either ThiH or ThiS.

Its subcellular location is the cytoplasm. The enzyme catalyses [ThiS sulfur-carrier protein]-C-terminal-Gly-aminoethanethioate + 2-iminoacetate + 1-deoxy-D-xylulose 5-phosphate = [ThiS sulfur-carrier protein]-C-terminal Gly-Gly + 2-[(2R,5Z)-2-carboxy-4-methylthiazol-5(2H)-ylidene]ethyl phosphate + 2 H2O + H(+). The protein operates within cofactor biosynthesis; thiamine diphosphate biosynthesis. In terms of biological role, catalyzes the rearrangement of 1-deoxy-D-xylulose 5-phosphate (DXP) to produce the thiazole phosphate moiety of thiamine. Sulfur is provided by the thiocarboxylate moiety of the carrier protein ThiS. In vitro, sulfur can be provided by H(2)S. The chain is Thiazole synthase from Pseudomonas entomophila (strain L48).